Reading from the N-terminus, the 301-residue chain is tRNA dimethylallyltransferase (301 aa).

9–16 (GPTASGKS) is a binding site for ATP. 11 to 16 (TASGKS) serves as a coordination point for substrate. Positions 34–37 (DSMQ) are interaction with substrate tRNA.

It belongs to the IPP transferase family. As to quaternary structure, monomer. The cofactor is Mg(2+).

It carries out the reaction adenosine(37) in tRNA + dimethylallyl diphosphate = N(6)-dimethylallyladenosine(37) in tRNA + diphosphate. Functionally, catalyzes the transfer of a dimethylallyl group onto the adenine at position 37 in tRNAs that read codons beginning with uridine, leading to the formation of N6-(dimethylallyl)adenosine (i(6)A). The chain is tRNA dimethylallyltransferase from Corynebacterium efficiens (strain DSM 44549 / YS-314 / AJ 12310 / JCM 11189 / NBRC 100395).